Here is a 458-residue protein sequence, read N- to C-terminus: Bifunctional protein GlmU (458 aa).

Residues 1–232 are pyrophosphorylase; it reads MTSSLSVIIL…TFEIEGVNNR (232 aa). UDP-N-acetyl-alpha-D-glucosamine-binding positions include 10–13, Lys-24, Gln-79, 84–85, 106–108, Gly-142, Glu-157, Asn-172, and Asn-230; these read LAAG, GT, and YGD. Asp-108 contributes to the Mg(2+) binding site. Asn-230 is a Mg(2+) binding site. The tract at residues 233-253 is linker; it reads QQLASLERTWQGKLVADLQEA. Positions 254–458 are N-acetyltransferase; the sequence is GVQFADPTRV…KNDFKRPTKK (205 aa). UDP-N-acetyl-alpha-D-glucosamine-binding residues include Arg-336 and Lys-354. His-366 (proton acceptor) is an active-site residue. Tyr-369 and Asn-380 together coordinate UDP-N-acetyl-alpha-D-glucosamine. Acetyl-CoA contacts are provided by residues Ala-383, 389-390, Ser-408, Ala-426, and Arg-443; that span reads NY.

In the N-terminal section; belongs to the N-acetylglucosamine-1-phosphate uridyltransferase family. The protein in the C-terminal section; belongs to the transferase hexapeptide repeat family. In terms of assembly, homotrimer. It depends on Mg(2+) as a cofactor.

The protein localises to the cytoplasm. It catalyses the reaction alpha-D-glucosamine 1-phosphate + acetyl-CoA = N-acetyl-alpha-D-glucosamine 1-phosphate + CoA + H(+). The enzyme catalyses N-acetyl-alpha-D-glucosamine 1-phosphate + UTP + H(+) = UDP-N-acetyl-alpha-D-glucosamine + diphosphate. The protein operates within nucleotide-sugar biosynthesis; UDP-N-acetyl-alpha-D-glucosamine biosynthesis; N-acetyl-alpha-D-glucosamine 1-phosphate from alpha-D-glucosamine 6-phosphate (route II): step 2/2. Its pathway is nucleotide-sugar biosynthesis; UDP-N-acetyl-alpha-D-glucosamine biosynthesis; UDP-N-acetyl-alpha-D-glucosamine from N-acetyl-alpha-D-glucosamine 1-phosphate: step 1/1. It functions in the pathway bacterial outer membrane biogenesis; LPS lipid A biosynthesis. Catalyzes the last two sequential reactions in the de novo biosynthetic pathway for UDP-N-acetylglucosamine (UDP-GlcNAc). The C-terminal domain catalyzes the transfer of acetyl group from acetyl coenzyme A to glucosamine-1-phosphate (GlcN-1-P) to produce N-acetylglucosamine-1-phosphate (GlcNAc-1-P), which is converted into UDP-GlcNAc by the transfer of uridine 5-monophosphate (from uridine 5-triphosphate), a reaction catalyzed by the N-terminal domain. The polypeptide is Bifunctional protein GlmU (Psychrobacter cryohalolentis (strain ATCC BAA-1226 / DSM 17306 / VKM B-2378 / K5)).